A 157-amino-acid chain; its full sequence is MQCPSCQNTDSRVLESRSADAGKCVRRRRECLNCDFRFTTYERVETIPVTVIKRSNAKEIFCRSKLLNGLTRACEKTSINNQKIEAIVDEIETHLQQSNLKEISSVDLGEMILLHLKSVNEVAYIRFASVYRQFNGIEDFIDTLESFKPSNKFAAIS.

The segment at 3–34 is a zinc-finger region; that stretch reads CPSCQNTDSRVLESRSADAGKCVRRRRECLNC. The region spanning 49–139 is the ATP-cone domain; it reads VTVIKRSNAK…VYRQFNGIED (91 aa).

It belongs to the NrdR family. It depends on Zn(2+) as a cofactor.

Functionally, negatively regulates transcription of bacterial ribonucleotide reductase nrd genes and operons by binding to NrdR-boxes. In Prochlorococcus marinus (strain SARG / CCMP1375 / SS120), this protein is Transcriptional repressor NrdR.